The chain runs to 509 residues: ATP synthase subunit alpha (509 aa).

169–176 (GDRQTGKT) contacts ATP.

It belongs to the ATPase alpha/beta chains family. F-type ATPases have 2 components, CF(1) - the catalytic core - and CF(0) - the membrane proton channel. CF(1) has five subunits: alpha(3), beta(3), gamma(1), delta(1), epsilon(1). CF(0) has three main subunits: a(1), b(2) and c(9-12). The alpha and beta chains form an alternating ring which encloses part of the gamma chain. CF(1) is attached to CF(0) by a central stalk formed by the gamma and epsilon chains, while a peripheral stalk is formed by the delta and b chains.

The protein resides in the cell inner membrane. The catalysed reaction is ATP + H2O + 4 H(+)(in) = ADP + phosphate + 5 H(+)(out). Functionally, produces ATP from ADP in the presence of a proton gradient across the membrane. The alpha chain is a regulatory subunit. This is ATP synthase subunit alpha from Mesorhizobium japonicum (strain LMG 29417 / CECT 9101 / MAFF 303099) (Mesorhizobium loti (strain MAFF 303099)).